Here is a 179-residue protein sequence, read N- to C-terminus: Large ribosomal subunit protein uL6 (179 aa).

Belongs to the universal ribosomal protein uL6 family. As to quaternary structure, part of the 50S ribosomal subunit.

Functionally, this protein binds to the 23S rRNA, and is important in its secondary structure. It is located near the subunit interface in the base of the L7/L12 stalk, and near the tRNA binding site of the peptidyltransferase center. In Finegoldia magna (strain ATCC 29328 / DSM 20472 / WAL 2508) (Peptostreptococcus magnus), this protein is Large ribosomal subunit protein uL6.